A 116-amino-acid chain; its full sequence is Immunoglobulin heavy variable 3-13 (116 aa).

The first 19 residues, 1-19, serve as a signal peptide directing secretion; the sequence is MELGLSWVFLVAILEGVQC. The segment at 20–44 is framework-1; it reads EVQLVESGGGLVQPGGSLRLSCAAS. Residues 20 to 116 enclose the Ig-like domain; that stretch reads EVQLVESGGG…GDTAVYYCAR (97 aa). Cysteines 41 and 114 form a disulfide. Residues 45 to 52 form a complementarity-determining-1 region; it reads GFTFSSYD. The framework-2 stretch occupies residues 53-69; it reads MHWVRQATGKGLEWVSA. Residues 70–76 form a complementarity-determining-2 region; the sequence is IGTAGDP. The segment at 77 to 114 is framework-3; it reads YYPGSVKGRFTISRENAKNSLYLQMNSLRAGDTAVYYC. Residues 115–116 form a complementarity-determining-3 region; that stretch reads AR.

In terms of assembly, immunoglobulins are composed of two identical heavy chains and two identical light chains; disulfide-linked.

It localises to the secreted. It is found in the cell membrane. Its function is as follows. V region of the variable domain of immunoglobulin heavy chains that participates in the antigen recognition. Immunoglobulins, also known as antibodies, are membrane-bound or secreted glycoproteins produced by B lymphocytes. In the recognition phase of humoral immunity, the membrane-bound immunoglobulins serve as receptors which, upon binding of a specific antigen, trigger the clonal expansion and differentiation of B lymphocytes into immunoglobulins-secreting plasma cells. Secreted immunoglobulins mediate the effector phase of humoral immunity, which results in the elimination of bound antigens. The antigen binding site is formed by the variable domain of one heavy chain, together with that of its associated light chain. Thus, each immunoglobulin has two antigen binding sites with remarkable affinity for a particular antigen. The variable domains are assembled by a process called V-(D)-J rearrangement and can then be subjected to somatic hypermutations which, after exposure to antigen and selection, allow affinity maturation for a particular antigen. This is Immunoglobulin heavy variable 3-13 from Homo sapiens (Human).